Reading from the N-terminus, the 61-residue chain is Metallothionein-1A (61 aa).

N-acetylmethionine is present on Met-1. The beta stretch occupies residues 1-29 (MDPNCSCPTGGSCSCAGSCTCKACRCTSC). Cys-5, Cys-7, Cys-13, Cys-15, Cys-19, Cys-21, Cys-24, Cys-26, Cys-29, Cys-33, Cys-34, Cys-36, Cys-37, Cys-41, Cys-44, Cys-48, Cys-50, and Cys-57 together coordinate a divalent metal cation. The interval 30–61 (KKSCCSCCPAGCARCAQGCICKGASDKCSCCA) is alpha. At Ser-58 the chain carries Phosphoserine. A divalent metal cation is bound by residues Cys-59 and Cys-60.

It belongs to the metallothionein superfamily. Type 1 family. As to quaternary structure, monomer.

Its function is as follows. Metallothioneins have a high content of cysteine residues that bind various heavy metals; these proteins are transcriptionally regulated by both heavy metals and glucocorticoids. This chain is Metallothionein-1A (MT1A), found in Sus scrofa (Pig).